Reading from the N-terminus, the 278-residue chain is Tryptophan synthase alpha chain (278 aa).

Catalysis depends on proton acceptor residues E50 and D61.

The protein belongs to the TrpA family. As to quaternary structure, tetramer of two alpha and two beta chains.

It catalyses the reaction (1S,2R)-1-C-(indol-3-yl)glycerol 3-phosphate + L-serine = D-glyceraldehyde 3-phosphate + L-tryptophan + H2O. It functions in the pathway amino-acid biosynthesis; L-tryptophan biosynthesis; L-tryptophan from chorismate: step 5/5. In terms of biological role, the alpha subunit is responsible for the aldol cleavage of indoleglycerol phosphate to indole and glyceraldehyde 3-phosphate. This is Tryptophan synthase alpha chain from Afipia carboxidovorans (strain ATCC 49405 / DSM 1227 / KCTC 32145 / OM5) (Oligotropha carboxidovorans).